Here is a 75-residue protein sequence, read N- to C-terminus: Mu-conotoxin GIIIA (75 aa).

Positions 1 to 20 (MMSKLGVLLTICLLLFPLTA) are cleaved as a signal peptide. Positions 21-51 (LPMDGDEPANRPVERMQDNISSEQYPLFEKR) are excised as a propeptide. 3 cysteine pairs are disulfide-bonded: cysteine 54-cysteine 66, cysteine 55-cysteine 71, and cysteine 61-cysteine 72. Proline 57 and proline 58 each carry 4-hydroxyproline; partial. Proline 68 bears the 4-hydroxyproline mark. Alanine 73 carries the post-translational modification Alanine amide.

This sequence belongs to the conotoxin M superfamily. Post-translationally, hydroxylated; hydroxylations improve the ability to block Nav1.4/SCN4A sodium channels but does not affect folding. In terms of tissue distribution, expressed by the venom duct.

It localises to the secreted. Its function is as follows. Mu-conotoxins block voltage-gated sodium channels (Nav). This toxin potently blocks rat Nav1.4/SCN4A (IC(50)= 19-110 nM). It also moderately blocks rNav1.1/SCN1A (Kd=260 nM), rNav1.2/SCN2A (IC(50)=2.7-17.8 uM), and mNav1.6/SCN8A (IC(50)=680 nM). The inhibition is reversible. In vivo, induces paralysis to an isolated skeletal muscle preparation from frog (cutaneous pectoralis) within a few minutes. The polypeptide is Mu-conotoxin GIIIA (Conus geographus (Geography cone)).